Consider the following 456-residue polypeptide: uncharacterized protein (456 aa).

Residues 2-60 (AMRKGKEYELNIEEIEFPSMGIAYHEGLKVYVKHGIPGQKVLARITTKKKDHAKGKIIE) form the TRAM domain. [4Fe-4S] cluster-binding residues include cysteine 73, cysteine 79, cysteine 82, and cysteine 162. S-adenosyl-L-methionine-binding residues include glutamine 288, tyrosine 317, glutamate 338, and aspartate 383. The active-site Nucleophile is the cysteine 410.

This sequence belongs to the class I-like SAM-binding methyltransferase superfamily. RNA M5U methyltransferase family.

This is an uncharacterized protein from Clostridium tetani (strain Massachusetts / E88).